The primary structure comprises 104 residues: MAAKIRRDDEVIVLTGKDKGKRGKVKNVLSSGKVIVEGINLVKKHQKPVPALNQPGGIVEKEAAIQVSNIAIFNAATGKADRVGFRFEDGKKVRFFKSNSETIK.

This sequence belongs to the universal ribosomal protein uL24 family. In terms of assembly, part of the 50S ribosomal subunit.

Functionally, one of two assembly initiator proteins, it binds directly to the 5'-end of the 23S rRNA, where it nucleates assembly of the 50S subunit. One of the proteins that surrounds the polypeptide exit tunnel on the outside of the subunit. In Citrobacter koseri (strain ATCC BAA-895 / CDC 4225-83 / SGSC4696), this protein is Large ribosomal subunit protein uL24.